We begin with the raw amino-acid sequence, 109 residues long: Guanylate cyclase activator 2B (109 aa).

The signal sequence occupies residues 1-23 (MKVLALPVAVAAMLLVLAQNTQS). Positions 24 to 94 (VYIQYEGFQV…NIFRALRSIS (71 aa)) are excised as a propeptide. 3 disulfides stabilise this stretch: Cys65-Cys78, Cys98-Cys106, and Cys101-Cys109.

It belongs to the guanylin family. In terms of tissue distribution, small and large intestine and atria and ventricles of heart. Both uroguanylin and prouroguanylin are found in plasma.

It is found in the secreted. Its function is as follows. Endogenous activator of intestinal guanylate cyclase. It stimulates this enzyme through the same receptor binding region as the heat-stable enterotoxins. May be a potent physiological regulator of intestinal fluid and electrolyte transport. May be an autocrine/paracrine regulator of intestinal salt and water transport. This is Guanylate cyclase activator 2B (GUCA2B) from Didelphis virginiana (North American opossum).